Here is a 507-residue protein sequence, read N- to C-terminus: Maturase K (507 aa).

The protein belongs to the intron maturase 2 family. MatK subfamily.

Its subcellular location is the plastid. It localises to the chloroplast. In terms of biological role, usually encoded in the trnK tRNA gene intron. Probably assists in splicing its own and other chloroplast group II introns. The protein is Maturase K of Browningia hertlingiana (Cactus).